We begin with the raw amino-acid sequence, 866 residues long: FHIP family protein v1g243165 (866 aa).

Disordered stretches follow at residues 739-761 and 781-814; these read RDGP…ASTS and GSTA…ESQT. A compositionally biased stretch (low complexity) spans 751-761; it reads SIGSIGSASTS.

The protein belongs to the FHIP family.

The sequence is that of FHIP family protein v1g243165 from Nematostella vectensis (Starlet sea anemone).